We begin with the raw amino-acid sequence, 361 residues long: UDP-N-acetylglucosamine--N-acetylmuramyl-(pentapeptide) pyrophosphoryl-undecaprenol N-acetylglucosamine transferase (361 aa).

UDP-N-acetyl-alpha-D-glucosamine contacts are provided by residues 21–23 (TGG), Asn131, Arg172, Ser195, Ile250, and Gln295.

Belongs to the glycosyltransferase 28 family. MurG subfamily.

It localises to the cell inner membrane. The enzyme catalyses di-trans,octa-cis-undecaprenyl diphospho-N-acetyl-alpha-D-muramoyl-L-alanyl-D-glutamyl-meso-2,6-diaminopimeloyl-D-alanyl-D-alanine + UDP-N-acetyl-alpha-D-glucosamine = di-trans,octa-cis-undecaprenyl diphospho-[N-acetyl-alpha-D-glucosaminyl-(1-&gt;4)]-N-acetyl-alpha-D-muramoyl-L-alanyl-D-glutamyl-meso-2,6-diaminopimeloyl-D-alanyl-D-alanine + UDP + H(+). The protein operates within cell wall biogenesis; peptidoglycan biosynthesis. In terms of biological role, cell wall formation. Catalyzes the transfer of a GlcNAc subunit on undecaprenyl-pyrophosphoryl-MurNAc-pentapeptide (lipid intermediate I) to form undecaprenyl-pyrophosphoryl-MurNAc-(pentapeptide)GlcNAc (lipid intermediate II). The chain is UDP-N-acetylglucosamine--N-acetylmuramyl-(pentapeptide) pyrophosphoryl-undecaprenol N-acetylglucosamine transferase from Solibacter usitatus (strain Ellin6076).